A 51-amino-acid polypeptide reads, in one-letter code: Large ribosomal subunit protein bL33 (51 aa).

This sequence belongs to the bacterial ribosomal protein bL33 family.

This is Large ribosomal subunit protein bL33 from Vesicomyosocius okutanii subsp. Calyptogena okutanii (strain HA).